A 256-amino-acid polypeptide reads, in one-letter code: Ribonuclease HII (256 aa).

An RNase H type-2 domain is found at 67-255; sequence QLVGGVDEVG…VSEMVGLKKA (189 aa). Asp73, Glu74, and Asp165 together coordinate a divalent metal cation.

The protein belongs to the RNase HII family. Mn(2+) is required as a cofactor. Requires Mg(2+) as cofactor.

The protein localises to the cytoplasm. It catalyses the reaction Endonucleolytic cleavage to 5'-phosphomonoester.. Functionally, endonuclease that specifically degrades the RNA of RNA-DNA hybrids. The polypeptide is Ribonuclease HII (Lactobacillus delbrueckii subsp. bulgaricus (strain ATCC 11842 / DSM 20081 / BCRC 10696 / JCM 1002 / NBRC 13953 / NCIMB 11778 / NCTC 12712 / WDCM 00102 / Lb 14)).